The primary structure comprises 429 residues: Tyrosine--tRNA ligase (429 aa).

Tyr36 serves as a coordination point for L-tyrosine. The 'HIGH' region motif lies at 41-50 (PTAASLHAGH). L-tyrosine is bound by residues Tyr171 and Gln175. The 'KMSKS' region signature appears at 231-235 (KFGKS). Residue Lys234 participates in ATP binding. An S4 RNA-binding domain is found at 360–417 (ATIVDLLVATGLAESRGAARRTVNEGGAAVNNQKIADPDWTPADGDYLHGRWLVVRRG).

This sequence belongs to the class-I aminoacyl-tRNA synthetase family. TyrS type 1 subfamily. As to quaternary structure, homodimer.

It is found in the cytoplasm. The catalysed reaction is tRNA(Tyr) + L-tyrosine + ATP = L-tyrosyl-tRNA(Tyr) + AMP + diphosphate + H(+). In terms of biological role, catalyzes the attachment of tyrosine to tRNA(Tyr) in a two-step reaction: tyrosine is first activated by ATP to form Tyr-AMP and then transferred to the acceptor end of tRNA(Tyr). The sequence is that of Tyrosine--tRNA ligase from Nocardia farcinica (strain IFM 10152).